The primary structure comprises 96 residues: Co-chaperonin GroES (96 aa).

It belongs to the GroES chaperonin family. Heptamer of 7 subunits arranged in a ring. Interacts with the chaperonin GroEL.

It localises to the cytoplasm. Functionally, together with the chaperonin GroEL, plays an essential role in assisting protein folding. The GroEL-GroES system forms a nano-cage that allows encapsulation of the non-native substrate proteins and provides a physical environment optimized to promote and accelerate protein folding. GroES binds to the apical surface of the GroEL ring, thereby capping the opening of the GroEL channel. This is Co-chaperonin GroES from Aromatoleum aromaticum (strain DSM 19018 / LMG 30748 / EbN1) (Azoarcus sp. (strain EbN1)).